We begin with the raw amino-acid sequence, 110 residues long: Large ribosomal subunit protein uL22 (110 aa).

This sequence belongs to the universal ribosomal protein uL22 family. In terms of assembly, part of the 50S ribosomal subunit.

This protein binds specifically to 23S rRNA; its binding is stimulated by other ribosomal proteins, e.g. L4, L17, and L20. It is important during the early stages of 50S assembly. It makes multiple contacts with different domains of the 23S rRNA in the assembled 50S subunit and ribosome. In terms of biological role, the globular domain of the protein is located near the polypeptide exit tunnel on the outside of the subunit, while an extended beta-hairpin is found that lines the wall of the exit tunnel in the center of the 70S ribosome. The protein is Large ribosomal subunit protein uL22 of Leptospira borgpetersenii serovar Hardjo-bovis (strain JB197).